The sequence spans 394 residues: MNKKSIRDVDLKGKRVFCRVDFNVPMKEGKITDETRIRAALPTIQYLVEQGAKVILASHLGRPKGQVVEELRLTPVAARLGELLGKDVKKADEAFGPVAQEMVAAMNEGDVLVLENVRFYAGEEKNDAELAKEFAALADIFVNDAFGAAHRAHASTAGIADYLPAVSGLLMEKELDVLGKALSNPDRPFTAIIGGAKVKDKIGVIRHLLDKVDNLIIGGGLAYTFVKALGHEIGLSLCEDDKIELAKEFMQLAKEKGVNFYMPVDVVITEEFSETATTKIVGIDSIPSNWEGVDIGPKTREIYADVIKNSKLVVWNGPMGVFEMTPFSQGTKAVGQALADAEGTYSVIGGGDSAAAVEKFGMADKMSHISTGGGASLEFMEGKELPGVVCLNDK.

Substrate-binding positions include 21-23, arginine 36, 59-62, arginine 118, and arginine 151; these read DFN and HLGR. Phosphoserine is present on serine 183. Residues lysine 201 and glycine 292 each contribute to the ATP site. Position 299 is a phosphothreonine (threonine 299). ATP contacts are provided by residues glutamate 323 and 350–353; that span reads GGDS.

Belongs to the phosphoglycerate kinase family. Monomer.

It is found in the cytoplasm. The enzyme catalyses (2R)-3-phosphoglycerate + ATP = (2R)-3-phospho-glyceroyl phosphate + ADP. Its pathway is carbohydrate degradation; glycolysis; pyruvate from D-glyceraldehyde 3-phosphate: step 2/5. The chain is Phosphoglycerate kinase from Bacillus cereus (strain Q1).